A 547-amino-acid polypeptide reads, in one-letter code: Mucin-13 (547 aa).

Over residues Met-1–Ser-210 the composition is skewed to low complexity. Residues Met-1–Pro-218 are disordered. An EGF-like 1 domain is found at Ser-210–Val-249. Disulfide bonds link Cys-214–Cys-225, Cys-219–Cys-234, and Cys-236–Cys-248. Asn-243, Asn-244, and Asn-263 each carry an N-linked (GlcNAc...) asparagine glycan. The SEA domain maps to Lys-250 to Asp-366. EGF-like domains are found at residues Gln-361–Val-401 and Val-401–Glu-441. Disulfide bonds link Cys-365-Cys-378, Cys-370-Cys-384, Cys-386-Cys-400, Cys-409-Cys-427, and Cys-429-Cys-440. A helical membrane pass occupies residues Ile-459 to Ile-479. Residues Val-480 to Tyr-547 lie on the Cytoplasmic side of the membrane. The disordered stretch occupies residues Lys-525–Tyr-547.

As to quaternary structure, homodimer of beta subunits. Cleaved into two subunits, alpha and beta, probably between the first EGF domain and the SEA domain. Beta subunit contains the cytoplasmic tail and alpha subunit the extracellular tail. The homooligomerization into dimers is dependent on intrachain disulfide bonds. In terms of processing, highly glycosylated.

The protein resides in the cell membrane. It localises to the secreted. In terms of biological role, epithelial and hemopoietic transmembrane mucin that may play a role in cell signaling. This is Mucin-13 (Muc13) from Rattus norvegicus (Rat).